We begin with the raw amino-acid sequence, 129 residues long: Follitropin subunit beta (129 aa).

The signal sequence occupies residues 1–18; sequence MKSVQFCFLFCCWKAICC. 6 disulfide bridges follow: Cys21-Cys69, Cys35-Cys84, Cys38-Cys122, Cys46-Cys100, Cys50-Cys102, and Cys105-Cys112. Asn25 and Asn42 each carry an N-linked (GlcNAc...) asparagine glycan.

It belongs to the glycoprotein hormones subunit beta family. As to quaternary structure, heterodimer. The active follitropin is a heterodimer composed of an alpha chain/CGA shared with other hormones and a unique beta chain/FSHB shown here.

It is found in the secreted. Together with the alpha chain CGA constitutes follitropin, the follicle-stimulating hormone, and provides its biological specificity to the hormone heterodimer. Binds FSHR, a G protein-coupled receptor, on target cells to activate downstream signaling pathways. Follitropin is involved in follicle development and spermatogenesis in reproductive organs. The chain is Follitropin subunit beta (FSHB) from Oryctolagus cuniculus (Rabbit).